The sequence spans 125 residues: Small ribosomal subunit protein uS11 (125 aa).

Belongs to the universal ribosomal protein uS11 family. In terms of assembly, part of the 30S ribosomal subunit. Interacts with proteins S7 and S18. Binds to IF-3.

In terms of biological role, located on the platform of the 30S subunit, it bridges several disparate RNA helices of the 16S rRNA. Forms part of the Shine-Dalgarno cleft in the 70S ribosome. This Coprothermobacter proteolyticus (strain ATCC 35245 / DSM 5265 / OCM 4 / BT) protein is Small ribosomal subunit protein uS11.